The following is a 211-amino-acid chain: Peroxiredoxin (211 aa).

Residues 2–156 (PLLGDDFPEL…ILRAVKVLQI (155 aa)) enclose the Thioredoxin domain. Catalysis depends on Cys-44, which acts as the Cysteine sulfenic acid (-SOH) intermediate. Substrate is bound at residue Arg-119. Residues Cys-199 and Cys-205 are joined by a disulfide bond.

It belongs to the peroxiredoxin family. Prx6 subfamily. As to quaternary structure, homodecamer. Pentamer of dimers that assemble into a ring structure.

Its subcellular location is the cytoplasm. It catalyses the reaction a hydroperoxide + [thioredoxin]-dithiol = an alcohol + [thioredoxin]-disulfide + H2O. Thiol-specific peroxidase that catalyzes the reduction of hydrogen peroxide and organic hydroperoxides to water and alcohols, respectively. Plays a role in cell protection against oxidative stress by detoxifying peroxides. This Chlorobaculum tepidum (strain ATCC 49652 / DSM 12025 / NBRC 103806 / TLS) (Chlorobium tepidum) protein is Peroxiredoxin.